The chain runs to 513 residues: Probable tubulin polyglutamylase ttll-15 (513 aa).

In terms of domain architecture, TTL spans 73–411; that stretch reads VTGSYESAHT…STPITKEADI (339 aa). ATP-binding positions include 216–219, lysine 229, and aspartate 231; that span reads QKFV.

The protein belongs to the tubulin--tyrosine ligase family. In terms of tissue distribution, expressed in hypodermis and pharyngeal muscles.

Functionally, probable polyglutamylase that forms polyglutamate side chains on tubulin. Probably acts when complexed with other proteins. Appears to be dispensable for polar spindle formation in dividing embryonic cells, for cilia-dependent osmotic avoidance and for male mating behavior. Regulates microtubule dynamics in uterine muscle cells. In Caenorhabditis elegans, this protein is Probable tubulin polyglutamylase ttll-15.